The primary structure comprises 149 residues: MHCPFCSAVDTKVIDSRLVGEGSQVRRRRQCLVCHERFTTFEVAELVMPRVIKSNEVREPFNEDKLRSGMLKALEKRPVSSDDVEMALNHIKSHLRATGEREVTTKMVGNLVMEALRKLDKVAYIRFASVYRSFEDIREFGEEIARLQD.

A zinc finger lies at 3-34 (CPFCSAVDTKVIDSRLVGEGSQVRRRRQCLVC). The ATP-cone domain maps to 49–139 (PRVIKSNEVR…VYRSFEDIRE (91 aa)).

It belongs to the NrdR family. Zn(2+) serves as cofactor.

In terms of biological role, negatively regulates transcription of bacterial ribonucleotide reductase nrd genes and operons by binding to NrdR-boxes. In Pectobacterium carotovorum subsp. carotovorum (strain PC1), this protein is Transcriptional repressor NrdR.